Reading from the N-terminus, the 209-residue chain is Abscisic acid receptor PYL3 (209 aa).

A disordered region spans residues 1–23 (MNLAPIHDPSSSSTTTTSSSTPY). Low complexity predominate over residues 10–21 (SSSSTTTTSSST). The START-like stretch occupies residues 43–205 (FPRSPNTCTS…NLQNLAVIST (163 aa)). Residues lysine 79, 113–118 (ASTSVE), 140–146 (RLNNYRS), and glutamate 170 contribute to the abscisate site. A Gate loop motif is present at residues 109-113 (SGLPA). The short motif at 139–141 (HRL) is the Latch loop element.

It belongs to the PYR/PYL/RCAR abscisic acid intracellular receptor family. In terms of assembly, homodimer and monomer. Binds ABA on one subunit only. ABA-binding favors monomer and trans-homodimer intermediate, and increases PP2C inhibitor activity. Binds both (-)-ABA and (+)-ABA. Binds to CARs protein in an ABA-independent manner, both at the plasma membrane and in the nucleus. Interacts with HAB1, ABI1 and ABI2, and possibly with other PP2Cs.

It localises to the cytoplasm. It is found in the nucleus. Its subcellular location is the cell membrane. Receptor for abscisic acid (ABA) required for ABA-mediated responses such as stomatal closure and germination inhibition. Inhibits the activity of group-A protein phosphatases type 2C (PP2Cs) when activated by ABA. Can be activated by both (-)-ABA and (+)-ABA. The chain is Abscisic acid receptor PYL3 (PYL3) from Arabidopsis thaliana (Mouse-ear cress).